A 414-amino-acid polypeptide reads, in one-letter code: CCA-adding enzyme (414 aa).

ATP is bound by residues glycine 8 and arginine 11. Glycine 8 and arginine 11 together coordinate CTP. Mg(2+) is bound by residues aspartate 21 and aspartate 23. Residues arginine 91, arginine 137, and arginine 140 each contribute to the ATP site. Arginine 91, arginine 137, and arginine 140 together coordinate CTP.

It belongs to the tRNA nucleotidyltransferase/poly(A) polymerase family. Bacterial CCA-adding enzyme type 2 subfamily. Mg(2+) is required as a cofactor.

The catalysed reaction is a tRNA precursor + 2 CTP + ATP = a tRNA with a 3' CCA end + 3 diphosphate. It carries out the reaction a tRNA with a 3' CCA end + 2 CTP + ATP = a tRNA with a 3' CCACCA end + 3 diphosphate. Catalyzes the addition and repair of the essential 3'-terminal CCA sequence in tRNAs without using a nucleic acid template. Adds these three nucleotides in the order of C, C, and A to the tRNA nucleotide-73, using CTP and ATP as substrates and producing inorganic pyrophosphate. tRNA 3'-terminal CCA addition is required both for tRNA processing and repair. Also involved in tRNA surveillance by mediating tandem CCA addition to generate a CCACCA at the 3' terminus of unstable tRNAs. While stable tRNAs receive only 3'-terminal CCA, unstable tRNAs are marked with CCACCA and rapidly degraded. This Buchnera aphidicola subsp. Acyrthosiphon pisum (strain Tuc7) protein is CCA-adding enzyme.